A 333-amino-acid polypeptide reads, in one-letter code: Uroporphyrinogen decarboxylase (333 aa).

Substrate-binding positions include 21–25, Asp-70, Tyr-139, Ser-194, and His-309; that span reads RQVGR.

Belongs to the uroporphyrinogen decarboxylase family. Homodimer.

The protein localises to the cytoplasm. The enzyme catalyses uroporphyrinogen III + 4 H(+) = coproporphyrinogen III + 4 CO2. It participates in porphyrin-containing compound metabolism; protoporphyrin-IX biosynthesis; coproporphyrinogen-III from 5-aminolevulinate: step 4/4. Its function is as follows. Catalyzes the decarboxylation of four acetate groups of uroporphyrinogen-III to yield coproporphyrinogen-III. The chain is Uroporphyrinogen decarboxylase from Chlamydia caviae (strain ATCC VR-813 / DSM 19441 / 03DC25 / GPIC) (Chlamydophila caviae).